The sequence spans 1255 residues: DNA-directed RNA polymerase subunit beta' (1255 aa).

The Zn(2+) site is built by Cys-60, Cys-62, Cys-77, and Cys-80. Mg(2+) contacts are provided by Asp-503, Asp-505, and Asp-507. Zn(2+) contacts are provided by Cys-875, Cys-950, Cys-957, and Cys-960.

It belongs to the RNA polymerase beta' chain family. As to quaternary structure, the RNAP catalytic core consists of 2 alpha, 1 beta, 1 beta' and 1 omega subunit. When a sigma factor is associated with the core the holoenzyme is formed, which can initiate transcription. Mg(2+) serves as cofactor. Requires Zn(2+) as cofactor.

The enzyme catalyses RNA(n) + a ribonucleoside 5'-triphosphate = RNA(n+1) + diphosphate. In terms of biological role, DNA-dependent RNA polymerase catalyzes the transcription of DNA into RNA using the four ribonucleoside triphosphates as substrates. This Mycoplasma mycoides subsp. mycoides SC (strain CCUG 32753 / NCTC 10114 / PG1) protein is DNA-directed RNA polymerase subunit beta'.